Here is a 523-residue protein sequence, read N- to C-terminus: Glutamate--cysteine ligase (523 aa).

This sequence belongs to the glutamate--cysteine ligase type 1 family. Type 1 subfamily.

It carries out the reaction L-cysteine + L-glutamate + ATP = gamma-L-glutamyl-L-cysteine + ADP + phosphate + H(+). It functions in the pathway sulfur metabolism; glutathione biosynthesis; glutathione from L-cysteine and L-glutamate: step 1/2. The polypeptide is Glutamate--cysteine ligase (Baumannia cicadellinicola subsp. Homalodisca coagulata).